Here is a 446-residue protein sequence, read N- to C-terminus: Tubulin beta-1 chain (446 aa).

GTP contacts are provided by Gln11, Glu69, Ser138, Gly142, Thr143, Gly144, Asn204, and Asn226. Glu69 is a Mg(2+) binding site.

Belongs to the tubulin family. As to quaternary structure, dimer of alpha and beta chains. A typical microtubule is a hollow water-filled tube with an outer diameter of 25 nm and an inner diameter of 15 nM. Alpha-beta heterodimers associate head-to-tail to form protofilaments running lengthwise along the microtubule wall with the beta-tubulin subunit facing the microtubule plus end conferring a structural polarity. Microtubules usually have 13 protofilaments but different protofilament numbers can be found in some organisms and specialized cells. Mg(2+) serves as cofactor.

The protein resides in the cytoplasm. It localises to the cytoskeleton. Its function is as follows. Tubulin is the major constituent of microtubules, a cylinder consisting of laterally associated linear protofilaments composed of alpha- and beta-tubulin heterodimers. Microtubules grow by the addition of GTP-tubulin dimers to the microtubule end, where a stabilizing cap forms. Below the cap, tubulin dimers are in GDP-bound state, owing to GTPase activity of alpha-tubulin. The chain is Tubulin beta-1 chain (TUBB1) from Suillus bovinus (Jersey cow bolete).